The chain runs to 94 residues: Aspartyl/glutamyl-tRNA(Asn/Gln) amidotransferase subunit C (94 aa).

It belongs to the GatC family. As to quaternary structure, heterotrimer of A, B and C subunits.

It catalyses the reaction L-glutamyl-tRNA(Gln) + L-glutamine + ATP + H2O = L-glutaminyl-tRNA(Gln) + L-glutamate + ADP + phosphate + H(+). It carries out the reaction L-aspartyl-tRNA(Asn) + L-glutamine + ATP + H2O = L-asparaginyl-tRNA(Asn) + L-glutamate + ADP + phosphate + 2 H(+). Functionally, allows the formation of correctly charged Asn-tRNA(Asn) or Gln-tRNA(Gln) through the transamidation of misacylated Asp-tRNA(Asn) or Glu-tRNA(Gln) in organisms which lack either or both of asparaginyl-tRNA or glutaminyl-tRNA synthetases. The reaction takes place in the presence of glutamine and ATP through an activated phospho-Asp-tRNA(Asn) or phospho-Glu-tRNA(Gln). In Desulfitobacterium hafniense (strain DSM 10664 / DCB-2), this protein is Aspartyl/glutamyl-tRNA(Asn/Gln) amidotransferase subunit C.